The following is a 928-amino-acid chain: DNA mismatch repair protein MutS (928 aa).

Position 613–620 (613–620) interacts with ATP; sequence GPNMAGKS. Basic and acidic residues predominate over residues 854–872; the sequence is KAKSNKDDHRIDEKTENSS. The disordered stretch occupies residues 854–880; it reads KAKSNKDDHRIDEKTENSSKKHKNKDS.

The protein belongs to the DNA mismatch repair MutS family.

This protein is involved in the repair of mismatches in DNA. It is possible that it carries out the mismatch recognition step. This protein has a weak ATPase activity. The chain is DNA mismatch repair protein MutS from Clostridium beijerinckii (strain ATCC 51743 / NCIMB 8052) (Clostridium acetobutylicum).